Here is a 121-residue protein sequence, read N- to C-terminus: Ribonuclease P protein component (121 aa).

The protein belongs to the RnpA family. As to quaternary structure, consists of a catalytic RNA component (M1 or rnpB) and a protein subunit.

The catalysed reaction is Endonucleolytic cleavage of RNA, removing 5'-extranucleotides from tRNA precursor.. In terms of biological role, RNaseP catalyzes the removal of the 5'-leader sequence from pre-tRNA to produce the mature 5'-terminus. It can also cleave other RNA substrates such as 4.5S RNA. The protein component plays an auxiliary but essential role in vivo by binding to the 5'-leader sequence and broadening the substrate specificity of the ribozyme. This Neisseria meningitidis serogroup A / serotype 4A (strain DSM 15465 / Z2491) protein is Ribonuclease P protein component.